The following is a 520-amino-acid chain: Ribonuclease Y (520 aa).

Topologically, residues 1–3 (MTP) are extracellular. Residues 4-24 (IMMVLISILLILLGLVVGYFV) traverse the membrane as a helical segment. Over 25-520 (RKTIAEAKIA…RETRAVEYAK (496 aa)) the chain is Cytoplasmic. Positions 29 to 141 (AEAKIAGARG…KVDEMIRMQQ (113 aa)) form a coiled coil. Positions 210–273 (TVSVVNLPND…ETARIALDKL (64 aa)) constitute a KH domain. The region spanning 336-429 (VLKHSMEVAF…VAAADALSAA (94 aa)) is the HD domain.

This sequence belongs to the RNase Y family. In terms of assembly, homodimer. Component of a possible RNA degradosome complex composed of rny, rnjA, rnjB, pnp, pfkA and eno (although rnjA and rnjB's presence is unclear). Interacts with RNA helicase CshA which may also be a member of the RNA degradosome complex. Interacts with full-length dynamin-like protein DynA. Mg(2+) is required as a cofactor. The cofactor is Mn(2+). It depends on Zn(2+) as a cofactor.

The protein resides in the cell membrane. Shows preference for transcripts carrying a monophosphate group at the 5' end. Endoribonuclease that initiates mRNA decay. Initiates the decay of all SAM-dependent riboswitches, such as yitJ riboswitch. Involved in processing of the gapA operon mRNA, it cleaves between cggR and gapA. Is also the decay-initiating endonuclease for rpsO mRNA. Involved in degradation of type I toxin-antitoxin system bsrG/SR4 RNAs and a minor role in degradation of type I toxin-antitoxin system bsrE/SR5 degradation. The chain is Ribonuclease Y (rny) from Bacillus subtilis (strain 168).